A 1086-amino-acid chain; its full sequence is Fused isobutyryl-CoA mutase (1086 aa).

Residues 10-140 form the B12-binding domain; that stretch reads HVRFVTASSL…QGMINVMLEE (131 aa). His-23 contacts adenosylcob(III)alamin. The segment at 153-407 is GTPase chaperone MeaI; it reads LERLPSGDVQ…FVALVDTINK (255 aa). GTP is bound at residue 210–215; that stretch reads GAGKSS. Residues Ser-214, Val-238, Asp-239, and Asp-252 each coordinate Mg(2+). Position 255 (Arg-255) interacts with GTP. Residues Glu-300 and Thr-301 each coordinate Mg(2+). 347–350 serves as a coordination point for GTP; it reads NKFE. Positions 408-570 are linker; sequence KAGTNWKTSL…YKENVPGSFP (163 aa). Phe-578, Arg-613, Arg-719, Tyr-763, Ser-812, Arg-847, and Lys-852 together coordinate substrate. 2 residues coordinate GTP: Glu-964 and Asn-1085.

It belongs to the IcmF family. As to quaternary structure, homodimer. The cofactor is adenosylcob(III)alamin. Requires Mg(2+) as cofactor.

The enzyme catalyses 2-methylpropanoyl-CoA = butanoyl-CoA. It catalyses the reaction 3-methylbutanoyl-CoA = 2,2-dimethylpropanoyl-CoA. The catalysed reaction is GTP + H2O = GDP + phosphate + H(+). Its function is as follows. Catalyzes the reversible interconversion of isobutyryl-CoA and n-butyryl-CoA, and to a lesser extent, of pivalyl-CoA and isovaleryl-CoA, using radical chemistry. Also exhibits GTPase activity, associated with its G-protein domain (MeaI) that functions as a chaperone that assists cofactor delivery and proper holo-enzyme assembly. Also displays ATPase activity. Is not able to convert 3-hydroxybutyryl-CoA to 2-hydroxyisobutyryl-CoA. Does not exhibit methylmalonyl-CoA mutase (MCM) activity. This is Fused isobutyryl-CoA mutase from Geobacillus kaustophilus (strain HTA426).